The following is a 657-amino-acid chain: Acetyl-coenzyme A synthetase (657 aa).

CoA is bound by residues 192–195 (RRGK) and Thr311. Residues 387–389 (GEP), 411–416 (DTWWQT), Asp504, Arg519, and Arg530 contribute to the ATP site. Residues His543 and Val546 each coordinate Mg(2+). Arg592 lines the CoA pocket. N6-acetyllysine is present on Lys617.

The protein belongs to the ATP-dependent AMP-binding enzyme family. Mg(2+) serves as cofactor. In terms of processing, acetylated. Deacetylation by the SIR2-homolog deacetylase activates the enzyme.

The catalysed reaction is acetate + ATP + CoA = acetyl-CoA + AMP + diphosphate. Its function is as follows. Catalyzes the conversion of acetate into acetyl-CoA (AcCoA), an essential intermediate at the junction of anabolic and catabolic pathways. AcsA undergoes a two-step reaction. In the first half reaction, AcsA combines acetate with ATP to form acetyl-adenylate (AcAMP) intermediate. In the second half reaction, it can then transfer the acetyl group from AcAMP to the sulfhydryl group of CoA, forming the product AcCoA. The chain is Acetyl-coenzyme A synthetase from Campylobacter jejuni subsp. jejuni serotype O:6 (strain 81116 / NCTC 11828).